A 51-amino-acid chain; its full sequence is UPF0391 membrane protein PsycPRwf_2202 (51 aa).

Transmembrane regions (helical) follow at residues 6-26 (IIFAVIALLASLLGFGGVAGL) and 27-47 (SQNFAYIFLVVAVILFIIGFI).

It belongs to the UPF0391 family.

The protein localises to the cell membrane. In Psychrobacter sp. (strain PRwf-1), this protein is UPF0391 membrane protein PsycPRwf_2202.